Here is a 438-residue protein sequence, read N- to C-terminus: UDP-N-acetylmuramoylalanine--D-glutamate ligase (438 aa).

112–118 is a binding site for ATP; the sequence is GSNGKST.

The protein belongs to the MurCDEF family.

It localises to the cytoplasm. It catalyses the reaction UDP-N-acetyl-alpha-D-muramoyl-L-alanine + D-glutamate + ATP = UDP-N-acetyl-alpha-D-muramoyl-L-alanyl-D-glutamate + ADP + phosphate + H(+). The protein operates within cell wall biogenesis; peptidoglycan biosynthesis. Its function is as follows. Cell wall formation. Catalyzes the addition of glutamate to the nucleotide precursor UDP-N-acetylmuramoyl-L-alanine (UMA). The protein is UDP-N-acetylmuramoylalanine--D-glutamate ligase of Salmonella choleraesuis (strain SC-B67).